Here is a 193-residue protein sequence, read N- to C-terminus: Ion-translocating oxidoreductase complex subunit A (193 aa).

A run of 6 helical transmembrane segments spans residues 5-25 (LLLF…FLGL), 39-59 (MGMG…AWLI), 63-83 (ILIP…VIAV), 102-122 (LLGI…VALL), 134-154 (ALYG…FAAI), and 171-191 (AIAL…SGLV).

The protein belongs to the NqrDE/RnfAE family. In terms of assembly, the complex is composed of six subunits: RsxA, RsxB, RsxC, RsxD, RsxE and RsxG.

The protein localises to the cell inner membrane. Functionally, part of a membrane-bound complex that couples electron transfer with translocation of ions across the membrane. Required to maintain the reduced state of SoxR. This is Ion-translocating oxidoreductase complex subunit A from Escherichia fergusonii (strain ATCC 35469 / DSM 13698 / CCUG 18766 / IAM 14443 / JCM 21226 / LMG 7866 / NBRC 102419 / NCTC 12128 / CDC 0568-73).